An 89-amino-acid chain; its full sequence is Small ribosomal subunit protein uS15 (89 aa).

The protein belongs to the universal ribosomal protein uS15 family. In terms of assembly, part of the 30S ribosomal subunit. Forms a bridge to the 50S subunit in the 70S ribosome, contacting the 23S rRNA.

Its function is as follows. One of the primary rRNA binding proteins, it binds directly to 16S rRNA where it helps nucleate assembly of the platform of the 30S subunit by binding and bridging several RNA helices of the 16S rRNA. Forms an intersubunit bridge (bridge B4) with the 23S rRNA of the 50S subunit in the ribosome. The protein is Small ribosomal subunit protein uS15 of Renibacterium salmoninarum (strain ATCC 33209 / DSM 20767 / JCM 11484 / NBRC 15589 / NCIMB 2235).